We begin with the raw amino-acid sequence, 557 residues long: Glucose-6-phosphate isomerase (557 aa).

Catalysis depends on Glu-361, which acts as the Proton donor. Residues His-392 and Lys-520 contribute to the active site.

This sequence belongs to the GPI family.

The protein resides in the cytoplasm. The catalysed reaction is alpha-D-glucose 6-phosphate = beta-D-fructose 6-phosphate. The protein operates within carbohydrate biosynthesis; gluconeogenesis. It participates in carbohydrate degradation; glycolysis; D-glyceraldehyde 3-phosphate and glycerone phosphate from D-glucose: step 2/4. Catalyzes the reversible isomerization of glucose-6-phosphate to fructose-6-phosphate. In Acinetobacter venetianus (strain ATCC 31012 / DSM 23050 / BCRC 14357 / CCUG 45561 / CIP 110063 / KCTC 2702 / LMG 19082 / RAG-1), this protein is Glucose-6-phosphate isomerase.